We begin with the raw amino-acid sequence, 60 residues long: Homeobox protein engrailed-like (60 aa).

Residues 1 to 41 (GEQLCRLRAEFQASRYLTEERRTALARELRLNEAQIKIWFQ) constitute a DNA-binding region (homeobox).

Belongs to the engrailed homeobox family.

It localises to the nucleus. The chain is Homeobox protein engrailed-like from Lampetra planeri (Brook lamprey).